The sequence spans 587 residues: MSDSDMDIDDDEVEQKVQVHTIVRESELFDKPPIQASNSHNDVKRHSVTTPLDEQSKIIKEQAFAQDNGTLPRFPAPGIPPRSFFTGGGGNEPEQKRAALPCKFFAKGWCFNGVSCKFLHVKENSNCTSQQLAENSMAGNGGIRSDLERRILDSREGVRVSQLSENGVTSLPTREDISFMNPQRVFSSMSFVNPPGSQRVFPFNNEMRFMPSFENIRRESLKQTYGADFTDNRSLVINNANSFALRSSFVHEHRPSISSYLKTDMGSAGPAWTGSLSSSVPMNDRASTVGDFENGNSLSGSGSLPTLQGVAVSSDKGAEANTTSTKKKVSSDDWEPSEPFKASFTIPPYILPSSDALYDPFTDIENLGDRPLNDSLSSKGEHARKSSCQQKDGDSASGPQARDCKNDDKSSSCSQNQHQETVARSLEAHGVVEGVATSVVDQNDTATPSKEISSATAAENRVVLKRIKPAGHDSWHRSDGSSYKKTKKSDEIDGEVRSDAGMKVMRLFRTAVVETIKEMLKPLWREGRLTKDVHNMIVKKAAEKVVGAAVQFHQVPTDTESVDQYLGLSGTRIVKLVEGYVEKYGKP.

A C3H1-type zinc finger spans residues 96–123; it reads KRAALPCKFFAKGWCFNGVSCKFLHVKE. Disordered regions lie at residues 264–346, 368–421, and 467–492; these read DMGS…SFTI, GDRP…HQET, and IKPA…SDEI. A compositionally biased stretch (low complexity) spans 294 to 304; it reads NGNSLSGSGSL. Residues 470–479 show a composition bias toward basic and acidic residues; it reads AGHDSWHRSD.

As to quaternary structure, component of the transcription activator complex FRI-C composed of FRI, FRL1, SUF4, FLX and FES1. Interacts with FLX, (via C-terminus) with FRI (via C-terminus), and with RIN1, a component of the SWR1 chromatin-remodeling complex. As to expression, expressed in root and shoot apices and vasculature.

The protein localises to the nucleus. Its function is as follows. Transcriptional activator involved in the FRIGIDA-mediated vernalization pathway, but not in the autonomous flowering pathway. Acts cooperatively with FRI (FRIGIDA) or FRL1 (FRIGIDA-LIKE 1) to promote FLC (FLOWERING LOCUS C) expression. Required for the stabilization of the FRI-C complex. The chain is Protein FRIGIDA-ESSENTIAL 1 (FES1) from Arabidopsis thaliana (Mouse-ear cress).